The primary structure comprises 141 residues: Lutropin subunit beta (141 aa).

A signal peptide spans 1–20 (MEMLQGLLLWLLLSVGGVWA). 6 disulfide bridges follow: Cys29/Cys77, Cys43/Cys92, Cys46/Cys130, Cys54/Cys108, Cys58/Cys110, and Cys113/Cys120. An N-linked (GlcNAc...) asparagine glycan is attached at Asn33.

Belongs to the glycoprotein hormones subunit beta family. As to quaternary structure, heterodimer of a common alpha chain and a unique beta chain which confers biological specificity to thyrotropin, lutropin, follitropin and gonadotropin.

Its subcellular location is the secreted. Promotes spermatogenesis and ovulation by stimulating the testes and ovaries to synthesize steroids. This is Lutropin subunit beta (LHB1) from Ceratotherium simum (White rhinoceros).